Reading from the N-terminus, the 301-residue chain is Probable alpha-L-glutamate ligase (301 aa).

Residues 104–287 (LQLLSRKGIG…VAGMIYEFIE (184 aa)) form the ATP-grasp domain. ATP is bound by residues Lys-141, 178–179 (EF), Asp-187, and 211–213 (RSN). Mg(2+)-binding residues include Asp-248, Glu-260, and Asn-262. 3 residues coordinate Mn(2+): Asp-248, Glu-260, and Asn-262.

Belongs to the RimK family. The cofactor is Mg(2+). Mn(2+) serves as cofactor.

This is Probable alpha-L-glutamate ligase from Vibrio vulnificus (strain CMCP6).